A 418-amino-acid polypeptide reads, in one-letter code: Nisin biosynthesis protein NisC (418 aa).

This sequence to B.subtilis SpaC and S.epidermidis EpiC.

Could be implicated in the processing or the export process of the nisin lantibiotic. The polypeptide is Nisin biosynthesis protein NisC (nisC) (Lactococcus lactis subsp. lactis (Streptococcus lactis)).